The chain runs to 388 residues: 4-hydroxy-tetrahydrodipicolinate synthase 1, chloroplastic (388 aa).

Positions 1-51 (MPYLQPPRPHPHPHPTSRLSRASPPSPFPFFPAGTSRSGRLQPVPVSGHSA) are disordered. The transit peptide at 1-62 (MPYLQPPRPH…RVSKGKFAVA (62 aa)) directs the protein to the chloroplast. Thr-131 is a binding site for pyruvate. Residue Tyr-217 is the Proton donor/acceptor of the active site. Catalysis depends on Lys-245, which acts as the Schiff-base intermediate with substrate. A pyruvate-binding site is contributed by Ile-284.

The protein belongs to the DapA family. Tetramer of modified subunits derived from two genes in different combinations.

The protein resides in the plastid. The protein localises to the chloroplast. It catalyses the reaction L-aspartate 4-semialdehyde + pyruvate = (2S,4S)-4-hydroxy-2,3,4,5-tetrahydrodipicolinate + H2O + H(+). The protein operates within amino-acid biosynthesis; L-lysine biosynthesis via DAP pathway; (S)-tetrahydrodipicolinate from L-aspartate: step 3/4. With respect to regulation, sensitive to lysine inhibition. This inhibition increase in an allosteric manner with increasing concentration of the inhibitor. Functionally, catalyzes the condensation of (S)-aspartate-beta-semialdehyde [(S)-ASA] and pyruvate to 4-hydroxy-tetrahydrodipicolinate (HTPA). This chain is 4-hydroxy-tetrahydrodipicolinate synthase 1, chloroplastic, found in Triticum aestivum (Wheat).